The primary structure comprises 60 residues: Anionic antimicrobial peptide 2 (60 aa).

In terms of tissue distribution, hemolymph.

It localises to the secreted. Functionally, antimicrobial protein. Has antibacterial activity against the Gram-positive bacteria M.luteus (MIC=86.6 uM), L.monocytogenes (MIC=86.6 uM), and S.lutea (MIC=86.6 uM). Lacks antibacterial activity against the Gram-positive bacteria B.circulans and S.aureus, and the Gram-negative bacteria E.coli D31, E.coli ATCC 25922, and S.typhimurium. Has antifungal activity against P.pastoris (MIC=86.6 uM) and P.stipitis (MIC=90.9 uM), but lacks antifungal activity against A.niger, C.albicans, C.albidus, C.fructus, C.wickerhamii, F.oxysporum, S.cerevisiae, S.pombe, T.harzianum, and Z.marxianus. The chain is Anionic antimicrobial peptide 2 from Galleria mellonella (Greater wax moth).